A 345-amino-acid polypeptide reads, in one-letter code: Holliday junction branch migration complex subunit RuvB (345 aa).

The interval 4–185 (LDNRFVTPLS…FGVLCPMEFY (182 aa)) is large ATPase domain (RuvB-L). ATP is bound by residues Leu-24, Arg-25, Gly-66, Lys-69, Thr-70, Thr-71, 132–134 (EDY), Arg-175, Tyr-185, and Arg-222. Thr-70 contributes to the Mg(2+) binding site. The interval 186 to 256 (NEEELKDIIV…MTNKALNLLE (71 aa)) is small ATPAse domain (RuvB-S). Residues 259–345 (KEGFDSIDTK…ENINQYKFKI (87 aa)) are head domain (RuvB-H). DNA-binding residues include Arg-314 and Arg-319.

It belongs to the RuvB family. In terms of assembly, homohexamer. Forms an RuvA(8)-RuvB(12)-Holliday junction (HJ) complex. HJ DNA is sandwiched between 2 RuvA tetramers; dsDNA enters through RuvA and exits via RuvB. An RuvB hexamer assembles on each DNA strand where it exits the tetramer. Each RuvB hexamer is contacted by two RuvA subunits (via domain III) on 2 adjacent RuvB subunits; this complex drives branch migration. In the full resolvosome a probable DNA-RuvA(4)-RuvB(12)-RuvC(2) complex forms which resolves the HJ.

It is found in the cytoplasm. The catalysed reaction is ATP + H2O = ADP + phosphate + H(+). Functionally, the RuvA-RuvB-RuvC complex processes Holliday junction (HJ) DNA during genetic recombination and DNA repair, while the RuvA-RuvB complex plays an important role in the rescue of blocked DNA replication forks via replication fork reversal (RFR). RuvA specifically binds to HJ cruciform DNA, conferring on it an open structure. The RuvB hexamer acts as an ATP-dependent pump, pulling dsDNA into and through the RuvAB complex. RuvB forms 2 homohexamers on either side of HJ DNA bound by 1 or 2 RuvA tetramers; 4 subunits per hexamer contact DNA at a time. Coordinated motions by a converter formed by DNA-disengaged RuvB subunits stimulates ATP hydrolysis and nucleotide exchange. Immobilization of the converter enables RuvB to convert the ATP-contained energy into a lever motion, pulling 2 nucleotides of DNA out of the RuvA tetramer per ATP hydrolyzed, thus driving DNA branch migration. The RuvB motors rotate together with the DNA substrate, which together with the progressing nucleotide cycle form the mechanistic basis for DNA recombination by continuous HJ branch migration. Branch migration allows RuvC to scan DNA until it finds its consensus sequence, where it cleaves and resolves cruciform DNA. This Clostridium tetani (strain Massachusetts / E88) protein is Holliday junction branch migration complex subunit RuvB.